Here is a 240-residue protein sequence, read N- to C-terminus: Ribonuclease PH (240 aa).

Phosphate is bound by residues Arg87 and 125–127 (GTR).

It belongs to the RNase PH family. In terms of assembly, homohexameric ring arranged as a trimer of dimers.

The enzyme catalyses tRNA(n+1) + phosphate = tRNA(n) + a ribonucleoside 5'-diphosphate. Functionally, phosphorolytic 3'-5' exoribonuclease that plays an important role in tRNA 3'-end maturation. Removes nucleotide residues following the 3'-CCA terminus of tRNAs; can also add nucleotides to the ends of RNA molecules by using nucleoside diphosphates as substrates, but this may not be physiologically important. Probably plays a role in initiation of 16S rRNA degradation (leading to ribosome degradation) during starvation. In Crocosphaera subtropica (strain ATCC 51142 / BH68) (Cyanothece sp. (strain ATCC 51142)), this protein is Ribonuclease PH.